Here is a 2410-residue protein sequence, read N- to C-terminus: Dual specificity protein kinase splA (2410 aa).

Disordered stretches follow at residues 29–48 (NNNN…NNNN), 66–103 (NHPS…GELT), 116–158 (NTQT…SNGG), 187–252 (NISP…SSGI), 508–647 (QQLQ…VPSA), and 659–820 (SSSS…KKEG). 2 stretches are compositionally biased toward low complexity: residues 116 to 128 (NTQT…TSPN) and 137 to 158 (NTTT…SNGG). A compositionally biased stretch (pro residues) spans 514 to 525 (QPPPTIQPPPQQ). Positions 530–544 (LRGNRSSGNLSGLNS) are enriched in low complexity. Polar residues predominate over residues 545-554 (FSLKQSTDSL). Low complexity predominate over residues 560–583 (SQQSTVSSNSTPIAATPISPLTAP). The segment covering 584–594 (TSPPPPPPPPT) has biased composition (pro residues). 6 stretches are compositionally biased toward low complexity: residues 595–618 (NFNS…NTTV), 627–639 (VLPK…SPRP), 659–686 (SSSS…LNIS), 701–738 (SPSY…SPSV), 746–759 (ISPN…PNIS), and 777–813 (NTNN…NNTN). B30.2/SPRY domains lie at 822 to 1004 (SSWF…GPFS) and 1020 to 1209 (DSGG…PPFK). Disordered stretches follow at residues 1228 to 1428 (PNGN…NNIY) and 1493 to 1512 (SLGV…PRKI). 4 stretches are compositionally biased toward low complexity: residues 1229 to 1359 (NGNN…NNNI), 1373 to 1399 (SSTG…NNSS), 1419 to 1428 (SSTNNNNNIY), and 1493 to 1507 (SLGV…SPKT). A B30.2/SPRY 3 domain is found at 1481–1703 (PITASTNHTL…CVATFPGGHF (223 aa)). The 65-residue stretch at 1734 to 1798 (WAPNDVAIWL…INRLNRMIQI (65 aa)) folds into the SAM domain. A disordered region spans residues 1862–2105 (KSYTQKEIED…PPPPPQLPVR (244 aa)). A compositionally biased stretch (basic and acidic residues) spans 1865–1874 (TQKEIEDRNR). Residues 1951–1967 (SVSSTGGSSGFLTFPSS) show a composition bias toward low complexity. Polar residues predominate over residues 1989–2002 (ITSNYKGITNTGQP). Residues 2020-2070 (SNNGNNGNNNNNNNNNNIKANQQQQQQSSYQQSQTQQQQQHITSTSTSTTN) are compositionally biased toward low complexity. Pro residues predominate over residues 2089–2102 (PSRPPPPPPPPPQL). A Protein kinase domain is found at 2115 to 2387 (LEFGQTIGKG…FKQIIVHLKE (273 aa)). ATP-binding positions include 2121–2129 (IGKGFFGEV) and Lys2142. Asp2243 functions as the Proton acceptor in the catalytic mechanism.

Belongs to the protein kinase superfamily. TKL Tyr protein kinase family. In terms of processing, tyrosine kinase domain is capable of autophosphorylation, in vitro; however it is also autophosphorylated on serine and threonine residues.

The enzyme catalyses L-tyrosyl-[protein] + ATP = O-phospho-L-tyrosyl-[protein] + ADP + H(+). In terms of biological role, essential for spore differentiation. In Dictyostelium discoideum (Social amoeba), this protein is Dual specificity protein kinase splA (splA).